The primary structure comprises 620 residues: Chaperone protein HscA homolog (620 aa).

It belongs to the heat shock protein 70 family.

Functionally, chaperone involved in the maturation of iron-sulfur cluster-containing proteins. Has a low intrinsic ATPase activity which is markedly stimulated by HscB. This chain is Chaperone protein HscA homolog, found in Shewanella sp. (strain MR-7).